The sequence spans 180 residues: ATP-dependent protease subunit HslV (180 aa).

Threonine 7 is a catalytic residue. Positions 163, 166, and 169 each coordinate Na(+).

The protein belongs to the peptidase T1B family. HslV subfamily. As to quaternary structure, a double ring-shaped homohexamer of HslV is capped on each side by a ring-shaped HslU homohexamer. The assembly of the HslU/HslV complex is dependent on binding of ATP.

The protein localises to the cytoplasm. The enzyme catalyses ATP-dependent cleavage of peptide bonds with broad specificity.. Its activity is regulated as follows. Allosterically activated by HslU binding. In terms of biological role, protease subunit of a proteasome-like degradation complex believed to be a general protein degrading machinery. This is ATP-dependent protease subunit HslV from Alcanivorax borkumensis (strain ATCC 700651 / DSM 11573 / NCIMB 13689 / SK2).